A 429-amino-acid chain; its full sequence is Enolase (429 aa).

Gln162 contributes to the (2R)-2-phosphoglycerate binding site. The active-site Proton donor is the Glu204. Residues Asp242, Glu289, and Asp316 each coordinate Mg(2+). Residues Lys341, Arg370, Ser371, and Lys392 each coordinate (2R)-2-phosphoglycerate. Catalysis depends on Lys341, which acts as the Proton acceptor.

The protein belongs to the enolase family. It depends on Mg(2+) as a cofactor.

Its subcellular location is the cytoplasm. It localises to the secreted. The protein localises to the cell surface. The enzyme catalyses (2R)-2-phosphoglycerate = phosphoenolpyruvate + H2O. It functions in the pathway carbohydrate degradation; glycolysis; pyruvate from D-glyceraldehyde 3-phosphate: step 4/5. Catalyzes the reversible conversion of 2-phosphoglycerate (2-PG) into phosphoenolpyruvate (PEP). It is essential for the degradation of carbohydrates via glycolysis. In Flavobacterium psychrophilum (strain ATCC 49511 / DSM 21280 / CIP 103535 / JIP02/86), this protein is Enolase.